The sequence spans 189 residues: Elongation factor P (189 aa).

The protein belongs to the elongation factor P family.

Its subcellular location is the cytoplasm. It functions in the pathway protein biosynthesis; polypeptide chain elongation. In terms of biological role, involved in peptide bond synthesis. Stimulates efficient translation and peptide-bond synthesis on native or reconstituted 70S ribosomes in vitro. Probably functions indirectly by altering the affinity of the ribosome for aminoacyl-tRNA, thus increasing their reactivity as acceptors for peptidyl transferase. The sequence is that of Elongation factor P from Rhizobium leguminosarum bv. trifolii (strain WSM2304).